We begin with the raw amino-acid sequence, 362 residues long: Prostaglandin F2-alpha receptor (362 aa).

At 1–31 the chain is on the extracellular side; that stretch reads MSTNSSIQPVSPESELLSNTTCQLEEDLSIS. N-linked (GlcNAc...) asparagine glycosylation is found at N4 and N19. Residues 32–54 form a helical membrane-spanning segment; the sequence is FSIIFMTVGILSNSLAIAILMKA. Over 55–69 the chain is Cytoplasmic; it reads YQRFRQKYKSSFLLL. A helical transmembrane segment spans residues 70-90; that stretch reads ASALVITDFFGHLINGTIAVF. At 91-109 the chain is on the extracellular side; sequence VYASDKDWIYFDKSNILCS. C108 and C186 are joined by a disulfide. The helical transmembrane segment at 110–131 threads the bilayer; sequence IFGICMVFSGLCPLFLGSLMAI. At 132–152 the chain is on the cytoplasmic side; sequence ERCIGVTKPIFHSTKITTKHV. Residues 153–175 form a helical membrane-spanning segment; sequence KMMLSGVCFFAVFVALLPILGHR. Residues 176-198 lie on the Extracellular side of the membrane; it reads DYKIQASRTWCFYKTDEIKDWED. A helical membrane pass occupies residues 199–224; sequence RFYLLLFAFLGLLALGISFVCNAITG. Residues 225-250 lie on the Cytoplasmic side of the membrane; sequence ISLLKVKFRSQQHRQGRSHHFEMVIQ. Residues 251-267 traverse the membrane as a helical segment; sequence LLGIMCVSCICWSPFLV. Residues 268–285 are Extracellular-facing; the sequence is TMASIGMNIQDFKDSCER. Residues 286–307 form a helical membrane-spanning segment; it reads TLFTLRMATWNQILDPWVYILL. Over 308–362 the chain is Cytoplasmic; sequence RKAVLRNLYVCTRRCCGVHVISLHVWELSSIKDSLKVAAISDLPVTEKVTQQTST.

This sequence belongs to the G-protein coupled receptor 1 family.

It localises to the cell membrane. Functionally, receptor for prostaglandin F2-alpha (PGF2-alpha). The activity of this receptor is mediated by G proteins which activate a phosphatidylinositol-calcium second messenger system. Initiates luteolysis in the corpus luteum. The sequence is that of Prostaglandin F2-alpha receptor (PTGFR) from Bos taurus (Bovine).